Here is a 196-residue protein sequence, read N- to C-terminus: Protein GrpE (196 aa).

The segment at 1–41 is disordered; the sequence is MSSKEQKTPEGQAPEEIITEQHDDVEAVEPEVSAEQVDPRD.

Belongs to the GrpE family. In terms of assembly, homodimer.

Its subcellular location is the cytoplasm. Functionally, participates actively in the response to hyperosmotic and heat shock by preventing the aggregation of stress-denatured proteins, in association with DnaK and GrpE. It is the nucleotide exchange factor for DnaK and may function as a thermosensor. Unfolded proteins bind initially to DnaJ; upon interaction with the DnaJ-bound protein, DnaK hydrolyzes its bound ATP, resulting in the formation of a stable complex. GrpE releases ADP from DnaK; ATP binding to DnaK triggers the release of the substrate protein, thus completing the reaction cycle. Several rounds of ATP-dependent interactions between DnaJ, DnaK and GrpE are required for fully efficient folding. The polypeptide is Protein GrpE (Klebsiella pneumoniae subsp. pneumoniae (strain ATCC 700721 / MGH 78578)).